The following is a 609-amino-acid chain: Proline--tRNA ligase (609 aa).

It belongs to the class-II aminoacyl-tRNA synthetase family. ProS type 1 subfamily. Homodimer.

Its subcellular location is the cytoplasm. The enzyme catalyses tRNA(Pro) + L-proline + ATP = L-prolyl-tRNA(Pro) + AMP + diphosphate. Functionally, catalyzes the attachment of proline to tRNA(Pro) in a two-step reaction: proline is first activated by ATP to form Pro-AMP and then transferred to the acceptor end of tRNA(Pro). As ProRS can inadvertently accommodate and process non-cognate amino acids such as alanine and cysteine, to avoid such errors it has two additional distinct editing activities against alanine. One activity is designated as 'pretransfer' editing and involves the tRNA(Pro)-independent hydrolysis of activated Ala-AMP. The other activity is designated 'posttransfer' editing and involves deacylation of mischarged Ala-tRNA(Pro). The misacylated Cys-tRNA(Pro) is not edited by ProRS. In Synechococcus sp. (strain JA-3-3Ab) (Cyanobacteria bacterium Yellowstone A-Prime), this protein is Proline--tRNA ligase.